Consider the following 461-residue polypeptide: Transforming growth factor beta-1-induced transcript 1 protein (461 aa).

The residue at position 1 (Met-1) is an N-acetylmethionine. The tract at residues Met-1–Gly-87 is disordered. The tract at residues Met-1–Gly-200 is transcription activation. The tract at residues Met-1–Val-240 is interaction with PTK2B/PYK2. An LD motif 1 motif is present at residues Asp-3–Thr-15. The residue at position 33 (Thr-33) is a Phosphothreonine. The residue at position 38 (Tyr-38) is a Phosphotyrosine. Residues His-40 to Ala-52 show a composition bias toward polar residues. Tyr-60 carries the phosphotyrosine; by FAK2 and FYN modification. Position 68 is a phosphoserine (Ser-68). Positions Ser-83 to Pro-136 are interaction with PTK2/FAK1. Positions Glu-92–Gln-104 match the LD motif 2 motif. Residues Pro-116–Thr-152 are disordered. The segment covering Glu-124 to Arg-135 has biased composition (basic and acidic residues). Residues Ser-137, Ser-140, Ser-141, Ser-143, Ser-164, and Ser-186 each carry the phosphoserine modification. The LD motif 3 motif lies at Glu-157–Phe-168. Positions Asn-172–Asp-205 are disordered. Residues Pro-183–Ser-192 show a composition bias toward polar residues. Thr-188 carries the phosphothreonine modification. Phosphoserine occurs at positions 192 and 194. An LD motif 4 motif is present at residues Ser-203–Leu-215. LIM zinc-binding domains lie at Gly-226 to Pro-285, Arg-286 to Ala-343, Pro-344 to Ser-403, and Leu-404 to Gly-461. At Ser-403 the chain carries Phosphoserine. Thr-407 is subject to Phosphothreonine.

The protein belongs to the paxillin family. Homooligomer. Interacts with PPARG. Interacts with TRAF4. Interacts with CRIP2. Interacts with HSPB1. Interacts with ILK. Interacts with LIMS1 and LIMS2. Interacts with NCK2. Interacts with NUDT16L1. Interacts with PAK. Interacts with PTPN12. Interacts with TCF3. Interacts with TCF7L2. Interacts with VCL. Interacts (via LD motif 3) with GIT1. Also interacts with GIT2. Forms a complex with ARHGEF7. Interacts with AR/androgen receptor in a ligand-dependent manner. Interacts with CSK. Interacts with PTK2/FAK1 and PTK2B/PYK2. Interacts with SLC6A3 and SLC6A4. Interacts with NR3C1. Interacts with SMAD3. Interacts with MAPK15. Interacts with SRC. Interacts with LYN. Interacts with talin. Interacts (via LIM zinc-binding domain 2) with CBLC (via RING-type zinc finger); the interaction is direct and enhances CBLC E3 ubiquitin-protein ligase activity. Interacts with PARVA. Interacts with PXN. Post-translationally, phosphorylated by gonadotropin-releasing hormone-activated SRC. Expressed in platelets, smooth muscle and prostate stromal cells (at protein level).

It localises to the cell junction. Its subcellular location is the focal adhesion. The protein resides in the nucleus matrix. It is found in the cytoplasm. The protein localises to the cytoskeleton. Its function is as follows. Functions as a molecular adapter coordinating multiple protein-protein interactions at the focal adhesion complex and in the nucleus. Links various intracellular signaling modules to plasma membrane receptors and regulates the Wnt and TGFB signaling pathways. May also regulate SLC6A3 and SLC6A4 targeting to the plasma membrane hence regulating their activity. In the nucleus, functions as a nuclear receptor coactivator regulating glucocorticoid, androgen, mineralocorticoid and progesterone receptor transcriptional activity. May play a role in the processes of cell growth, proliferation, migration, differentiation and senescence. May have a zinc-dependent DNA-binding activity. The polypeptide is Transforming growth factor beta-1-induced transcript 1 protein (TGFB1I1) (Homo sapiens (Human)).